Here is a 354-residue protein sequence, read N- to C-terminus: Uroporphyrinogen decarboxylase (354 aa).

Residues 27–31 (RQAGR), D77, Y154, S209, and H327 contribute to the substrate site.

This sequence belongs to the uroporphyrinogen decarboxylase family. As to quaternary structure, homodimer.

Its subcellular location is the cytoplasm. It carries out the reaction uroporphyrinogen III + 4 H(+) = coproporphyrinogen III + 4 CO2. It functions in the pathway porphyrin-containing compound metabolism; protoporphyrin-IX biosynthesis; coproporphyrinogen-III from 5-aminolevulinate: step 4/4. In terms of biological role, catalyzes the decarboxylation of four acetate groups of uroporphyrinogen-III to yield coproporphyrinogen-III. The polypeptide is Uroporphyrinogen decarboxylase (Shewanella frigidimarina (strain NCIMB 400)).